The sequence spans 287 residues: ATP synthase gamma chain (287 aa).

It belongs to the ATPase gamma chain family. As to quaternary structure, F-type ATPases have 2 components, CF(1) - the catalytic core - and CF(0) - the membrane proton channel. CF(1) has five subunits: alpha(3), beta(3), gamma(1), delta(1), epsilon(1). CF(0) has three main subunits: a, b and c.

The protein localises to the cell inner membrane. Functionally, produces ATP from ADP in the presence of a proton gradient across the membrane. The gamma chain is believed to be important in regulating ATPase activity and the flow of protons through the CF(0) complex. This Xanthomonas oryzae pv. oryzae (strain MAFF 311018) protein is ATP synthase gamma chain.